We begin with the raw amino-acid sequence, 181 residues long: MKLKFISMAVFSALTLGVATNASAVTTVNGGTVHFKGEVVDAACAVNTNSANQTVLLGQVRSAKLANDGEKSSPVGFSIELNDCSSATAGHASIIFAGNVIATHNDVLSLQNSAAGSATNVGIQILDHTGTAVQFDGVTASTQFTLTDGTNKIPFQAVYYATGKSTPGIANADATFKVQYQ.

A signal peptide spans 1–24 (MKLKFISMAVFSALTLGVATNASA). An intrachain disulfide couples cysteine 44 to cysteine 84.

Belongs to the fimbrial protein family.

The protein resides in the fimbrium. Its function is as follows. Fimbriae (also called pili), polar filaments radiating from the surface of the bacterium to a length of 0.5-1.5 micrometers and numbering 100-300 per cell, enable bacteria to colonize the epithelium of specific host organs. Functionally, the major fimbrial subunit. Interacts with alpha-sialic acid-(2-3)-beta-Gal containing receptors. It belongs to the group of Mrh (Mannose-resistant hemagglutination) fimbrial proteins. This Escherichia coli O6:K15:H31 (strain 536 / UPEC) protein is S-fimbrial protein subunit SfaA (sfaA).